Here is a 349-residue protein sequence, read N- to C-terminus: Aspartate-semialdehyde dehydrogenase (349 aa).

NADP(+)-binding positions include 12-15 (TGSV) and 39-40 (NS). Phosphate is bound at residue Arg-113. Cys-148 serves as the catalytic Acyl-thioester intermediate. Gln-175 contacts substrate. Residue 178–179 (SG) participates in NADP(+) binding. A substrate-binding site is contributed by Glu-201. Position 204 (Lys-204) interacts with phosphate. Arg-234 provides a ligand contact to substrate. Residue His-241 is the Proton acceptor of the active site. 326–327 (NT) is an NADP(+) binding site.

The protein belongs to the aspartate-semialdehyde dehydrogenase family. As to quaternary structure, homodimer.

It catalyses the reaction L-aspartate 4-semialdehyde + phosphate + NADP(+) = 4-phospho-L-aspartate + NADPH + H(+). The protein operates within amino-acid biosynthesis; L-lysine biosynthesis via DAP pathway; (S)-tetrahydrodipicolinate from L-aspartate: step 2/4. It functions in the pathway amino-acid biosynthesis; L-methionine biosynthesis via de novo pathway; L-homoserine from L-aspartate: step 2/3. Its pathway is amino-acid biosynthesis; L-threonine biosynthesis; L-threonine from L-aspartate: step 2/5. Functionally, catalyzes the NADPH-dependent formation of L-aspartate-semialdehyde (L-ASA) by the reductive dephosphorylation of L-aspartyl-4-phosphate. This is Aspartate-semialdehyde dehydrogenase from Leptospira interrogans serogroup Icterohaemorrhagiae serovar Lai (strain 56601).